The sequence spans 517 residues: MEKTQTPSLTPDELSARSSTPFEEREEEEEVHYVGHLKFSFIFVGLCLSVFQVALSLQDIGWYGSAYLFTDCAFQLVFGRLYSMLPVKIVYLGALLLFEIGSIICATAPNSIALILGRTIAGIGAGGILSGALTILSQSVPRAKVAVFNGILGAVNGIAFICGPLLAGGIINGTTWRWIFYINPIISAPTFFITVFLLKLDPPKTNVKTWRGRIAMLDLPAFTLFLGSILCLILALLWGGKEYSWKNARIIVLFILFGVIMLAFMLVQKRKGDDALVPMRILCQRSIAFGMFFSFCTSGTGFILEYYLPIWLQVIKDLSVISSAVKLLPIIAAAVVFTTLCGILTPVIGHYVPFMIIATMLLSVGMGLLSTLEYTSPIRHVLGFQVPAGVGLGCALQQTLVAAQTILPMNDIPIGVSLIVLAQTLGGTIALSAADTIYTGTLSSSISSRFPQINRETVLTTGNREIRNLVPAESLSVIMDLCNKAIVKTWYLSIGLAAASIIGVLGMEWRRVTPPKK.

The tract at residues 1–24 (MEKTQTPSLTPDELSARSSTPFEE) is disordered. 5 helical membrane passes run 37-57 (LKFSFIFVGLCLSVFQVALSL), 59-79 (DIGWYGSAYLFTDCAFQLVFG), 89-109 (IVYLGALLLFEIGSIICATAP), 112-132 (IALILGRTIAGIGAGGILSGA), and 151-171 (ILGAVNGIAFICGPLLAGGII). A glycan (N-linked (GlcNAc...) asparagine) is linked at Asn172. The next 9 helical transmembrane spans lie at 178 to 198 (WIFYINPIISAPTFFITVFLL), 219 to 239 (LPAFTLFLGSILCLILALLWG), 247 to 267 (NARIIVLFILFGVIMLAFMLV), 292 to 312 (FFSFCTSGTGFILEYYLPIWL), 328 to 348 (LPIIAAAVVFTTLCGILTPVI), 352 to 372 (VPFMIIATMLLSVGMGLLSTL), 381 to 401 (VLGFQVPAGVGLGCALQQTLV), 412 to 432 (IPIGVSLIVLAQTLGGTIALS), and 485 to 505 (AIVKTWYLSIGLAAASIIGVL).

This sequence belongs to the major facilitator superfamily.

Its subcellular location is the cell membrane. Functionally, MFS efflux transporter; part of the inp gene cluster that mediates the biosynthesis of fellutamide B, a mycotoxin that acts as a proteasome inhibitor. In the first step of fellutabmide B biosynthesis inpC activates 3-hydroxydodecanoic acid to generate 3-hydroxydodecanoyl-AMP that is then loaded onto the T0 domain of inpB. The 3-hydroxydodecanoyl-S-phosphopantetheinyl-T0 is sequentially extended with L-Asn and L-Gln by the two CAT modules of inpB. The linear lipodipeptide from inpB is then transferred onto inpA for the addition of the third amino acid, L-Leu. Reductive releasing of the lipotripeptide by the TE domain of inpA produces (2S)-fellutamide B. InpF might be involved in the release and transfer of the lipodipeptide from inpB to inpA. The inp cluster-encoded proteasome subunit inpE confers resistance to internally produced fellutamides. The MFS efflux transporter inpD may contribute to fellutamide resistance as well. The polypeptide is MFS efflux transporter inpD (Emericella nidulans (strain FGSC A4 / ATCC 38163 / CBS 112.46 / NRRL 194 / M139) (Aspergillus nidulans)).